We begin with the raw amino-acid sequence, 276 residues long: NH(3)-dependent NAD(+) synthetase (276 aa).

43 to 50 (GISGGVDS) provides a ligand contact to ATP. A Mg(2+)-binding site is contributed by Asp-49. Arg-146 contacts deamido-NAD(+). Residue Thr-166 participates in ATP binding. Position 171 (Glu-171) interacts with Mg(2+). Lys-179 and Asp-186 together coordinate deamido-NAD(+). Lys-195 and Thr-217 together coordinate ATP. 266–267 (HK) is a deamido-NAD(+) binding site.

The protein belongs to the NAD synthetase family. Homodimer.

It carries out the reaction deamido-NAD(+) + NH4(+) + ATP = AMP + diphosphate + NAD(+) + H(+). It participates in cofactor biosynthesis; NAD(+) biosynthesis; NAD(+) from deamido-NAD(+) (ammonia route): step 1/1. Its function is as follows. Catalyzes the ATP-dependent amidation of deamido-NAD to form NAD. Uses ammonia as a nitrogen source. The sequence is that of NH(3)-dependent NAD(+) synthetase from Shewanella frigidimarina (strain NCIMB 400).